We begin with the raw amino-acid sequence, 588 residues long: Transcription factor tau 60 kDa subunit (588 aa).

The tract at residues 399–588 (LPKLPENFSM…VYCGTTLEVM (190 aa)) is sufficient for SPT15-binding.

Heterodimer with TFC6. Component of the TFIIIC complex composed of TFC1, TFC3, TFC4, TFC6, TFC7 and TFC8. The subunits are organized in two globular domains, tauA and tauB, connected by a proteolysis-sensitive and flexible linker. Interacts with SPT15 and directly with TFC6.

The protein localises to the nucleus. In terms of biological role, TFIIIC mediates tRNA and 5S RNA gene activation by binding to intragenic promoter elements. Upstream of the transcription start site, TFIIIC assembles the initiation complex TFIIIB-TFIIIC-tDNA, which is sufficient for RNA polymerase III recruitment and function. Part of the tauB domain of TFIIIC that binds boxB DNA promoter sites of tRNA and similar genes. Plays a role in TFIIB assembly through its interaction with SPT15/TBP. Essential for cell viability. In Saccharomyces cerevisiae (strain ATCC 204508 / S288c) (Baker's yeast), this protein is Transcription factor tau 60 kDa subunit (TFC8).